A 109-amino-acid polypeptide reads, in one-letter code: uncharacterized protein (109 aa).

A run of 3 helical transmembrane segments spans residues 16–36 (HPHLGISFIGCLLAITLEIYF), 52–72 (LIVLLVINMVTIPVVMALIAL), and 87–107 (ILLCLLSCILTIAGLFIAYPV).

The protein localises to the cell membrane. This is an uncharacterized protein from Salmonella typhimurium (strain LT2 / SGSC1412 / ATCC 700720).